We begin with the raw amino-acid sequence, 505 residues long: Ookinete surface protein PIMMS43 (505 aa).

The N-terminal stretch at 1-24 is a signal peptide; that stretch reads MQKRIYVSLFFLVFFLSKISVVLS. Positions 188-221 are disordered; sequence ERRKKKLDDEQKRQKDLEDTNRKENDEEQSYKKL. Residues 485-505 form a helical membrane-spanning segment; the sequence is SSIYSSIKYFFLLMLFVIYIL.

As to quaternary structure, monomer. May form multimers with an unknown protein(s).

The protein localises to the membrane. In terms of biological role, involved in ookinete evasion of the mosquito complement-like response, oocyst maturation, sporozoite development and infectivity. In Plasmodium falciparum (isolate 3D7), this protein is Ookinete surface protein PIMMS43.